The chain runs to 357 residues: MDRFYSLSHSSIDFHFKQTPRDFVVEEVPLYEFCGEGEHLILFVRKKGISTLELVSMIAKYLGIKNKEIGYAGLKDKHAMTKQYISLHKKYEEKMDTFEHEDVKILSKTYHNNKIRIGHLNGNKFYIKLKKVNPTSALKIDEALKNIASFGMPNYFGYQRFGTDGNNHIDGELIAKGEKKERNPKVRQLLISAYQSHLFNLWLSRRLEINSLIQNFDVKELEPLLNIPQDELLKMKSQKHPFKLISGDIMEHYPYGRLFEFIGEAHDFDRFNAKDISVTGLLCGKKAKHSTGLSREIEKDFDDEINEDGARRYAWVFPKDIDGRYKDEEAQYELNFYLPKGCYATVLIEEIAKRKIV.

Asp-76 serves as the catalytic Nucleophile. Positions 151 to 331 (GMPNYFGYQR…DGRYKDEEAQ (181 aa)) constitute a TRUD domain.

Belongs to the pseudouridine synthase TruD family.

It carries out the reaction uridine(13) in tRNA = pseudouridine(13) in tRNA. In terms of biological role, responsible for synthesis of pseudouridine from uracil-13 in transfer RNAs. The polypeptide is tRNA pseudouridine synthase D (Sulfurimonas denitrificans (strain ATCC 33889 / DSM 1251) (Thiomicrospira denitrificans (strain ATCC 33889 / DSM 1251))).